Reading from the N-terminus, the 185-residue chain is MINEIYENSNSRMKKSIDFFKKNISKIRTNRVSPSLIENIYINCYGTSVPLSKLSNILSEKSNILKINVFDNNIIKKIEQAILSSDLGVNPQIQENYIRIEFPKLTEARRFELIKLINKEAEQNIISIRNIRRDANEKIKKLIKAKTIGKDEDKKFQEVIQNLTNSRIEDTKKILKLKEKEIKKI.

Belongs to the RRF family.

The protein resides in the cytoplasm. Functionally, responsible for the release of ribosomes from messenger RNA at the termination of protein biosynthesis. May increase the efficiency of translation by recycling ribosomes from one round of translation to another. In Wigglesworthia glossinidia brevipalpis, this protein is Ribosome-recycling factor.